Reading from the N-terminus, the 309-residue chain is Diadenylate cyclase (309 aa).

Positions 144–301 (TITLYELFET…DGKIVFETDP (158 aa)) constitute a DAC domain.

Belongs to the adenylate cyclase family. DacZ subfamily. The cofactor is Mn(2+).

It carries out the reaction 2 ATP = 3',3'-c-di-AMP + 2 diphosphate. In terms of biological role, diadenylate cyclase that catalyzes the condensation of 2 ATP molecules into cyclic di-AMP (c-di-AMP). c-di-AMP is a second messenger for intracellular signal transduction involved in the control of important regulatory processes such as osmoregulation. The protein is Diadenylate cyclase of Methanocaldococcus jannaschii (strain ATCC 43067 / DSM 2661 / JAL-1 / JCM 10045 / NBRC 100440) (Methanococcus jannaschii).